The chain runs to 556 residues: Formate--tetrahydrofolate ligase (556 aa).

65–72 (TPAGEGKS) is an ATP binding site.

This sequence belongs to the formate--tetrahydrofolate ligase family.

The catalysed reaction is (6S)-5,6,7,8-tetrahydrofolate + formate + ATP = (6R)-10-formyltetrahydrofolate + ADP + phosphate. Its pathway is one-carbon metabolism; tetrahydrofolate interconversion. This Streptococcus pneumoniae (strain Taiwan19F-14) protein is Formate--tetrahydrofolate ligase.